The following is a 227-amino-acid chain: Ribose-5-phosphate isomerase A (227 aa).

Substrate-binding positions include 26–29 (TGST), 82–85 (DGAD), and 95–98 (KGGG). Glutamate 104 functions as the Proton acceptor in the catalytic mechanism. Substrate is bound at residue lysine 122.

Belongs to the ribose 5-phosphate isomerase family. Homodimer.

It carries out the reaction aldehydo-D-ribose 5-phosphate = D-ribulose 5-phosphate. The protein operates within carbohydrate degradation; pentose phosphate pathway; D-ribose 5-phosphate from D-ribulose 5-phosphate (non-oxidative stage): step 1/1. Functionally, catalyzes the reversible conversion of ribose-5-phosphate to ribulose 5-phosphate. The protein is Ribose-5-phosphate isomerase A of Streptococcus pneumoniae serotype 2 (strain D39 / NCTC 7466).